Reading from the N-terminus, the 156-residue chain is Small ribosomal subunit protein uS7 (156 aa).

The protein belongs to the universal ribosomal protein uS7 family. Part of the 30S ribosomal subunit. Contacts proteins S9 and S11.

In terms of biological role, one of the primary rRNA binding proteins, it binds directly to 16S rRNA where it nucleates assembly of the head domain of the 30S subunit. Is located at the subunit interface close to the decoding center, probably blocks exit of the E-site tRNA. This is Small ribosomal subunit protein uS7 from Streptococcus suis (strain 98HAH33).